Reading from the N-terminus, the 305-residue chain is Protein MFI (305 aa).

As to quaternary structure, can homodimerize. Interacts with MFF; the interaction inhibits MFF interaction with DNM1L.

Its subcellular location is the cytoplasm. It is found in the cytosol. The protein localises to the mitochondrion outer membrane. Acts as an inhibitor of mitochondrial fission. Interacts with MFF and prevents DNM1L recruitment to mitochondria, promoting a more fused mitochondrial network. This is Protein MFI from Rattus norvegicus (Rat).